A 227-amino-acid chain; its full sequence is Transmembrane emp24 domain-containing protein 1 (227 aa).

Positions methionine 1 to alanine 24 are cleaved as a signal peptide. The Extracellular portion of the chain corresponds to glycine 25 to asparagine 194. The region spanning lysine 43–phenylalanine 125 is the GOLD domain. Residues glutamate 145–glutamine 170 are a coiled coil. A helical transmembrane segment spans residues phenylalanine 195–leucine 215. Residues lysine 216–threonine 227 lie on the Cytoplasmic side of the membrane. The short motif at phenylalanine 218–phenylalanine 219 is the COPII vesicle coat-binding element. Positions phenylalanine 218–threonine 227 match the COPI vesicle coat-binding motif.

Belongs to the EMP24/GP25L family. In terms of assembly, homodimer in endoplasmic reticulum, endoplasmic reticulum-Golgi intermediate compartment and cis-Golgi network. Interacts with IL1RL1. Interacts with RNF26; this interaction is important to modulate innate immune signaling through the cGAS-STING pathway. As to expression, widely expressed.

The protein resides in the cell membrane. It localises to the endoplasmic reticulum membrane. The protein localises to the golgi apparatus. Its subcellular location is the cis-Golgi network membrane. It is found in the endoplasmic reticulum-Golgi intermediate compartment membrane. Potential role in vesicular protein trafficking, mainly in the early secretory pathway. May act as a cargo receptor at the lumenal side for incorporation of secretory cargo molecules into transport vesicles and may be involved in vesicle coat formation at the cytoplasmic side. Plays a positive role in IL-33-mediated IL-8 and IL-6 production by interacting with interleukin-33 receptor IL1RL1. Plays also a role in the modulation of innate immune signaling through the cGAS-STING pathway by interacting with RNF26. The polypeptide is Transmembrane emp24 domain-containing protein 1 (Tmed1) (Mus musculus (Mouse)).